A 67-amino-acid chain; its full sequence is Large ribosomal subunit protein bL35 (67 aa).

Belongs to the bacterial ribosomal protein bL35 family.

The chain is Large ribosomal subunit protein bL35 from Agrobacterium fabrum (strain C58 / ATCC 33970) (Agrobacterium tumefaciens (strain C58)).